A 184-amino-acid polypeptide reads, in one-letter code: ATP synthase subunit delta (184 aa).

It belongs to the ATPase delta chain family. F-type ATPases have 2 components, F(1) - the catalytic core - and F(0) - the membrane proton channel. F(1) has five subunits: alpha(3), beta(3), gamma(1), delta(1), epsilon(1). F(0) has three main subunits: a(1), b(2) and c(10-14). The alpha and beta chains form an alternating ring which encloses part of the gamma chain. F(1) is attached to F(0) by a central stalk formed by the gamma and epsilon chains, while a peripheral stalk is formed by the delta and b chains.

It is found in the cell inner membrane. Its function is as follows. F(1)F(0) ATP synthase produces ATP from ADP in the presence of a proton or sodium gradient. F-type ATPases consist of two structural domains, F(1) containing the extramembraneous catalytic core and F(0) containing the membrane proton channel, linked together by a central stalk and a peripheral stalk. During catalysis, ATP synthesis in the catalytic domain of F(1) is coupled via a rotary mechanism of the central stalk subunits to proton translocation. This protein is part of the stalk that links CF(0) to CF(1). It either transmits conformational changes from CF(0) to CF(1) or is implicated in proton conduction. This chain is ATP synthase subunit delta, found in Rickettsia canadensis (strain McKiel).